A 482-amino-acid polypeptide reads, in one-letter code: Zinc finger protein 385B (482 aa).

Positions 1–105 (MNMATFLRGF…TGSACHTTTL (105 aa)) are required for induction of apoptosis. 2 consecutive Matrin-type zinc fingers follow at residues 34–64 (SFCE…RVKQ) and 169–199 (ISCN…KVKA). 3 disordered regions span residues 54–75 (DGKS…PPVQ), 189–259 (KGSK…SFLL), and 268–287 (LGAI…SVAE). Residues 106–482 (PALVRTPTLM…TPASILFAPY (377 aa)) form an interaction with p53/TP53 region. The segment covering 231 to 240 (SSDKSEDKGK) has biased composition (basic and acidic residues). The segment at 294 to 328 (KKLLYCSLCKVAVNSLSQLEAHNTGSKHKTMVEAR) adopts a Matrin-type 3 zinc-finger fold. Disordered stretches follow at residues 331 to 352 (AGPI…GSKG) and 378 to 397 (HISS…KPKY). The segment at 360-390 (FHCEICDVHVNSEIQLKQHISSRRHKDRVAG) adopts a Matrin-type 4 zinc-finger fold.

In terms of assembly, interacts with p53/TP53; the interaction is direct.

The protein localises to the nucleus. May play a role in p53/TP53-mediated apoptosis. This Mus musculus (Mouse) protein is Zinc finger protein 385B (Znf385b).